A 402-amino-acid polypeptide reads, in one-letter code: 5-methylphenazine-1-carboxylate 1-monooxygenase (402 aa).

Residues 14-15, 35-36, 43-45, arginine 106, valine 132, arginine 191, and aspartate 310 contribute to the FAD site; these read IG, ES, and LGV. The segment covering 368-385 has biased composition (basic and acidic residues); sequence REKEEWAAASRPKTEKSA. A disordered region spans residues 368 to 402; that stretch reads REKEEWAAASRPKTEKSAALEAITGSYRNQVERPR.

As to quaternary structure, monomer in solution. Probably interacts transiently with PhzM. FAD is required as a cofactor.

It catalyses the reaction 5-methyl-phenazine-1-carboxylate + NADH + O2 + 2 H(+) = pyocyanin + CO2 + NAD(+) + H2O. Its pathway is secondary metabolite biosynthesis; pyocyanine biosynthesis. In terms of biological role, involved in the biosynthesis of pyocyanine, a blue-pigmented phenazine derivative, which plays a role in virulence. Catalyzes the oxidative decarboxylation of 5-methylphenazine-1-carboxylate (5-methyl-PCA) to pyocyanine. Can also act on phenazine-1-carboxylate (PCA), converting it into 1-hydroxyphenazine (1-HP). However, PCA is a poor substrate. The protein is 5-methylphenazine-1-carboxylate 1-monooxygenase of Pseudomonas aeruginosa (strain ATCC 15692 / DSM 22644 / CIP 104116 / JCM 14847 / LMG 12228 / 1C / PRS 101 / PAO1).